Consider the following 383-residue polypeptide: Phospho-N-acetylmuramoyl-pentapeptide-transferase (383 aa).

9 helical membrane passes run 26 to 46 (TAGA…GVIE), 73 to 93 (TMGG…WAEL), 98 to 118 (IILL…DDFL), 131 to 151 (IYKI…LYYF), 182 to 202 (IFLP…IPFA), 221 to 241 (GLAI…SYVS), 258 to 278 (AGEV…FLWF), 283 to 305 (AQVF…IALF), and 360 to 380 (QVVF…IATL).

This sequence belongs to the glycosyltransferase 4 family. MraY subfamily. It depends on Mg(2+) as a cofactor.

The protein resides in the cell inner membrane. The enzyme catalyses UDP-N-acetyl-alpha-D-muramoyl-L-alanyl-gamma-D-glutamyl-meso-2,6-diaminopimeloyl-D-alanyl-D-alanine + di-trans,octa-cis-undecaprenyl phosphate = di-trans,octa-cis-undecaprenyl diphospho-N-acetyl-alpha-D-muramoyl-L-alanyl-D-glutamyl-meso-2,6-diaminopimeloyl-D-alanyl-D-alanine + UMP. It participates in cell wall biogenesis; peptidoglycan biosynthesis. Catalyzes the initial step of the lipid cycle reactions in the biosynthesis of the cell wall peptidoglycan: transfers peptidoglycan precursor phospho-MurNAc-pentapeptide from UDP-MurNAc-pentapeptide onto the lipid carrier undecaprenyl phosphate, yielding undecaprenyl-pyrophosphoryl-MurNAc-pentapeptide, known as lipid I. The polypeptide is Phospho-N-acetylmuramoyl-pentapeptide-transferase (Brachyspira hyodysenteriae (strain ATCC 49526 / WA1)).